Consider the following 424-residue polypeptide: Histidine--tRNA ligase (424 aa).

The protein belongs to the class-II aminoacyl-tRNA synthetase family. As to quaternary structure, homodimer.

It localises to the cytoplasm. The enzyme catalyses tRNA(His) + L-histidine + ATP = L-histidyl-tRNA(His) + AMP + diphosphate + H(+). The chain is Histidine--tRNA ligase from Escherichia coli O139:H28 (strain E24377A / ETEC).